The sequence spans 88 residues: Large ribosomal subunit protein bL31 (88 aa).

A disordered region spans residues 67–88; it reads MGSVDNATSEKKSATDETSKES. Residues 74-88 show a composition bias toward basic and acidic residues; the sequence is TSEKKSATDETSKES.

This sequence belongs to the bacterial ribosomal protein bL31 family. Type A subfamily. As to quaternary structure, part of the 50S ribosomal subunit.

In terms of biological role, binds the 23S rRNA. This is Large ribosomal subunit protein bL31 from Synechococcus sp. (strain CC9311).